A 787-amino-acid polypeptide reads, in one-letter code: Pleckstrin homology domain-containing family G member 6 (787 aa).

Residues 161–353 (HQQEALWELL…ESFLRHINGQ (193 aa)) enclose the DH domain. Residues 409–509 (QLLLEGPVRV…WLEKTQHAQT (101 aa)) enclose the PH domain. The segment at 533 to 762 (QGTESPSTRP…EPGNGKPRRL (230 aa)) is disordered. Residues 535-557 (TESPSTRPSTPSPSPEDSQSSAE) are compositionally biased toward low complexity. Over residues 724 to 742 (LRPRSLREDMLREIREELA) the composition is skewed to basic and acidic residues.

As to quaternary structure, interacts with MYH10. Interacts with ELMO1 and EZR (in an open conformation). Interacts with CSPP1.

It is found in the cell projection. Its subcellular location is the microvillus. It localises to the cytoplasm. The protein resides in the cytoskeleton. The protein localises to the spindle. It is found in the cleavage furrow. Its function is as follows. Guanine nucleotide exchange factor activating the small GTPase RHOA, which, in turn, induces myosin filament formation. Also activates RHOG. Does not activate RAC1, or to a much lower extent than RHOA and RHOG. Part of a functional unit, involving PLEKHG6, MYH10 and RHOA, at the cleavage furrow to advance furrow ingression during cytokinesis. In epithelial cells, required for the formation of microvilli and membrane ruffles on the apical pole. Along with EZR, required for normal macropinocytosis. This is Pleckstrin homology domain-containing family G member 6 (Plekhg6) from Mus musculus (Mouse).